A 161-amino-acid polypeptide reads, in one-letter code: UPF0262 protein SPOA0072 (161 aa).

A disordered region spans residues 1–21 (MTMSRISHIELDDSNLPPPTP).

Belongs to the UPF0262 family.

This is UPF0262 protein SPOA0072 from Ruegeria pomeroyi (strain ATCC 700808 / DSM 15171 / DSS-3) (Silicibacter pomeroyi).